A 398-amino-acid polypeptide reads, in one-letter code: L-glutamine--4-(methylsulfanyl)-2-oxobutanoate aminotransferase (398 aa).

The residue at position 240 (Lys-240) is an N6-(pyridoxal phosphate)lysine.

It belongs to the class-I pyridoxal-phosphate-dependent aminotransferase family. MtnE subfamily. Pyridoxal 5'-phosphate is required as a cofactor.

The enzyme catalyses 4-methylsulfanyl-2-oxobutanoate + L-glutamine = 2-oxoglutaramate + L-methionine. It participates in amino-acid biosynthesis; L-methionine biosynthesis via salvage pathway; L-methionine from S-methyl-5-thio-alpha-D-ribose 1-phosphate: step 6/6. Its function is as follows. Involved in the methylthioribose (MTR) recycling pathway. Catalyzes the formation of methionine from 2-keto-4-methylthiobutyrate (KMTB). This chain is L-glutamine--4-(methylsulfanyl)-2-oxobutanoate aminotransferase, found in Bacillus subtilis (strain 168).